We begin with the raw amino-acid sequence, 121 residues long: Small ribosomal subunit protein uS13 (121 aa).

The tract at residues 94–121 (GLPLRGQRTRTNARTRKGPRKAGVALKK) is disordered.

The protein belongs to the universal ribosomal protein uS13 family. In terms of assembly, part of the 30S ribosomal subunit. Forms a loose heterodimer with protein S19. Forms two bridges to the 50S subunit in the 70S ribosome.

Its function is as follows. Located at the top of the head of the 30S subunit, it contacts several helices of the 16S rRNA. In the 70S ribosome it contacts the 23S rRNA (bridge B1a) and protein L5 of the 50S subunit (bridge B1b), connecting the 2 subunits; these bridges are implicated in subunit movement. Contacts the tRNAs in the A and P-sites. The protein is Small ribosomal subunit protein uS13 of Ralstonia nicotianae (strain ATCC BAA-1114 / GMI1000) (Ralstonia solanacearum).